Reading from the N-terminus, the 134-residue chain is Ribonuclease VapC11 (134 aa).

Positions 2–126 (ILIDTSAWVE…ADFDVIARIT (125 aa)) constitute a PINc domain. 2 residues coordinate Mg(2+): D5 and D98.

The protein belongs to the PINc/VapC protein family. Mg(2+) is required as a cofactor.

Toxic component of a type II toxin-antitoxin (TA) system. Acts as an RNase. Its toxic effects on cell growth and colony formation are neutralized by coexpression with cognate antitoxin VapB11. This is Ribonuclease VapC11 from Mycobacterium tuberculosis (strain CDC 1551 / Oshkosh).